A 248-amino-acid chain; its full sequence is Ribosomal RNA small subunit methyltransferase J (248 aa).

S-adenosyl-L-methionine-binding positions include 98–99 (RD), 114–115 (ER), 150–151 (SS), and Asp-168.

This sequence belongs to the methyltransferase superfamily. RsmJ family.

The protein resides in the cytoplasm. It catalyses the reaction guanosine(1516) in 16S rRNA + S-adenosyl-L-methionine = N(2)-methylguanosine(1516) in 16S rRNA + S-adenosyl-L-homocysteine + H(+). Specifically methylates the guanosine in position 1516 of 16S rRNA. This Shewanella baltica (strain OS195) protein is Ribosomal RNA small subunit methyltransferase J.